Consider the following 373-residue polypeptide: ATP synthase gamma chain 1, chloroplastic (373 aa).

The N-terminal 50 residues, 1–50 (MACSNLTTMWVSSKPSLSADSSSLSFRSVLKCPTNTSSPPSRASSVSPLQ), are a transit peptide targeting the chloroplast. Cysteine 139 is an active-site residue. A disulfide bridge links cysteine 249 with cysteine 255. Phosphoserine is present on serine 347.

The protein belongs to the ATPase gamma chain family. As to quaternary structure, F-type ATPases have 2 components, CF(1) - the catalytic core - and CF(0) - the membrane proton channel. CF(1) has five subunits: alpha(3), beta(3), gamma(1), delta(1), epsilon(1). CF(0) has four main subunits: a, b, b' and c. Interacts with PAB.

The protein resides in the plastid. It localises to the chloroplast thylakoid membrane. Produces ATP from ADP in the presence of a proton gradient across the membrane. The gamma chain is believed to be important in regulating ATPase activity and the flow of protons through the CF(0) complex. The polypeptide is ATP synthase gamma chain 1, chloroplastic (ATPC1) (Arabidopsis thaliana (Mouse-ear cress)).